The sequence spans 231 residues: Dihydropteridine reductase (231 aa).

6–30 (LVLGGSGALGAEVVKFFKSKSWNTI) serves as a coordination point for NADP(+). The Proton acceptor role is filled by Tyr-138.

It belongs to the short-chain dehydrogenases/reductases (SDR) family. Homodimer.

It carries out the reaction 5,6,7,8-tetrahydropteridine + NAD(+) = 6,7-dihydropteridine + NADH + H(+). It catalyses the reaction 5,6,7,8-tetrahydropteridine + NADP(+) = 6,7-dihydropteridine + NADPH + H(+). Its function is as follows. The product of this enzyme, tetrahydrobiopterin (BH-4), is an essential cofactor for phenylalanine, tyrosine, and tryptophan hydroxylases. The sequence is that of Dihydropteridine reductase (qdpr) from Dictyostelium discoideum (Social amoeba).